A 101-amino-acid chain; its full sequence is Urease subunit beta (101 aa).

The protein belongs to the urease beta subunit family. In terms of assembly, heterotrimer of UreA (gamma), UreB (beta) and UreC (alpha) subunits. Three heterotrimers associate to form the active enzyme.

Its subcellular location is the cytoplasm. The catalysed reaction is urea + 2 H2O + H(+) = hydrogencarbonate + 2 NH4(+). It participates in nitrogen metabolism; urea degradation; CO(2) and NH(3) from urea (urease route): step 1/1. This is Urease subunit beta from Cupriavidus metallidurans (strain ATCC 43123 / DSM 2839 / NBRC 102507 / CH34) (Ralstonia metallidurans).